The chain runs to 338 residues: Transcription factor GRA2 (338 aa).

Disordered regions lie at residues 171–230 (CQDS…PHYA) and 256–277 (TQHE…DGGS). Residues 174–203 (SGVSQPSNLADDTLGQGQPVSTVVQPQHPG) are compositionally biased toward polar residues. The tract at residues 223–236 (KRQRPHYAIEKRYR) is basic motif. Residues 223–303 (KRQRPHYAIE…NQATLCIRQL (81 aa)) form the bHLH domain. The interval 237–303 (AGLQERFEAL…NQATLCIRQL (67 aa)) is helix-loop-helix motif.

It is found in the nucleus. In terms of biological role, transcription factor that specifically regulates the expression of the gene cluster that mediates the biosynthesis of gramillins A and B, bicyclic lipopeptides that induce cell death in maize leaves but not in wheat leaves. The chain is Transcription factor GRA2 (GRA2) from Gibberella zeae (strain ATCC MYA-4620 / CBS 123657 / FGSC 9075 / NRRL 31084 / PH-1) (Wheat head blight fungus).